The following is a 73-amino-acid chain: Homeodomain-only protein (73 aa).

The segment at residues 3-62 (AEPANGPTEDQVEILEYNFNKVNRHPDPTTLCLIAAEAGLSEEETQKWFKQRLAQWRRSE) is a DNA-binding region (homeobox; degenerate).

As to quaternary structure, interacts with serum response factor (SRF). Component of a large complex containing histone deacetylases such as HDAC2. Interacts with the acetylated forms of HSPA1A and HSPA1B. Interacts with HSPA8.

It is found in the nucleus. Its subcellular location is the cytoplasm. Functionally, atypical homeodomain protein which does not bind DNA and is required to modulate cardiac growth and development. Acts via its interaction with SRF, thereby modulating the expression of SRF-dependent cardiac-specific genes and cardiac development. Prevents SRF-dependent transcription either by inhibiting SRF binding to DNA or by recruiting histone deacetylase (HDAC) proteins that prevent transcription by SRF. Overexpression causes cardiac hypertrophy. Acts as a co-chaperone for HSPA1A and HSPA1B chaperone proteins and assists in chaperone-mediated protein refolding. The polypeptide is Homeodomain-only protein (HOPX) (Sus scrofa (Pig)).